A 374-amino-acid chain; its full sequence is Nucleosome assembly protein 1;1 (374 aa).

Positions valine 26 to glutamate 80 form a coiled coil. Positions leucine 47–glutamine 62 match the Nuclear export signal motif. The short motif at lysine 223–lysine 228 is the Nuclear localization signal element. The segment covering alanine 299–aspartate 339 has biased composition (acidic residues). The disordered stretch occupies residues alanine 299–glutamine 374. The segment covering lysine 343–arginine 355 has biased composition (basic residues). Cysteine 371 is modified (cysteine methyl ester). Cysteine 371 carries the S-farnesyl cysteine lipid modification. The propeptide at lysine 372–glutamine 374 is removed in mature form.

Belongs to the nucleosome assembly protein (NAP) family. Binds preferentially histones H4 and H1 in vitro. Interacts with CYCB1;1.

Its subcellular location is the nucleus. It localises to the cytoplasm. In terms of biological role, may modulate chromatin structure by regulation of nucleosome assembly/disassembly. Could function together with B-type cyclins in the regulation of microtubule dynamics. This Nicotiana tabacum (Common tobacco) protein is Nucleosome assembly protein 1;1 (NAP1;1).